The sequence spans 261 residues: Small ribosomal subunit protein eS1z (261 aa).

Over residues 1-18 (MAVGKNKRISKGKKGGKK) the composition is skewed to basic residues. A disordered region spans residues 1–20 (MAVGKNKRISKGKKGGKKKA).

Belongs to the eukaryotic ribosomal protein eS1 family. Component of the small ribosomal subunit. Mature ribosomes consist of a small (40S) and a large (60S) subunit. The 40S subunit contains about 33 different proteins and 1 molecule of RNA (18S). The 60S subunit contains about 49 different proteins and 3 molecules of RNA (25S, 5.8S and 5S).

It localises to the cytoplasm. This is Small ribosomal subunit protein eS1z from Vitis vinifera (Grape).